The following is a 582-amino-acid chain: Aspartate--tRNA ligase (582 aa).

E174 provides a ligand contact to L-aspartate. The aspartate stretch occupies residues 198 to 201 (QITK). R220 provides a ligand contact to L-aspartate. ATP contacts are provided by residues 220–222 (RDE) and Q229. H443 contributes to the L-aspartate binding site. E477 serves as a coordination point for ATP. R484 lines the L-aspartate pocket. Residue 529–532 (GLDR) participates in ATP binding.

This sequence belongs to the class-II aminoacyl-tRNA synthetase family. Type 1 subfamily. As to quaternary structure, homodimer.

The protein localises to the cytoplasm. The enzyme catalyses tRNA(Asp) + L-aspartate + ATP = L-aspartyl-tRNA(Asp) + AMP + diphosphate. Its function is as follows. Catalyzes the attachment of L-aspartate to tRNA(Asp) in a two-step reaction: L-aspartate is first activated by ATP to form Asp-AMP and then transferred to the acceptor end of tRNA(Asp). This is Aspartate--tRNA ligase from Streptococcus pyogenes serotype M6 (strain ATCC BAA-946 / MGAS10394).